A 238-amino-acid chain; its full sequence is tRNA (guanine-N(7)-)-methyltransferase (238 aa).

S-adenosyl-L-methionine-binding residues include Glu-70, Asp-95, Asp-122, and Asp-145. Asp-145 is an active-site residue. Substrate is bound by residues Lys-149, Asp-181, and 216 to 219 (TKFE).

It belongs to the class I-like SAM-binding methyltransferase superfamily. TrmB family.

The enzyme catalyses guanosine(46) in tRNA + S-adenosyl-L-methionine = N(7)-methylguanosine(46) in tRNA + S-adenosyl-L-homocysteine. It participates in tRNA modification; N(7)-methylguanine-tRNA biosynthesis. Functionally, catalyzes the formation of N(7)-methylguanine at position 46 (m7G46) in tRNA. The sequence is that of tRNA (guanine-N(7)-)-methyltransferase from Neisseria gonorrhoeae (strain ATCC 700825 / FA 1090).